Consider the following 203-residue polypeptide: Holliday junction branch migration complex subunit RuvA (203 aa).

The segment at 1-64 (MIGRLRGIII…EDAQLLYGFN (64 aa)) is domain I. A domain II region spans residues 65–142 (NKQERTLFKE…KGLHGDLFTP (78 aa)). Residues 143 to 154 (AADLVLTSPASP) are flexible linker. The domain III stretch occupies residues 155–203 (ATDDAEQEAVAALVALGYKPQEASRMVSKIARPDASSETLIREALRAAL).

The protein belongs to the RuvA family. In terms of assembly, homotetramer. Forms an RuvA(8)-RuvB(12)-Holliday junction (HJ) complex. HJ DNA is sandwiched between 2 RuvA tetramers; dsDNA enters through RuvA and exits via RuvB. An RuvB hexamer assembles on each DNA strand where it exits the tetramer. Each RuvB hexamer is contacted by two RuvA subunits (via domain III) on 2 adjacent RuvB subunits; this complex drives branch migration. In the full resolvosome a probable DNA-RuvA(4)-RuvB(12)-RuvC(2) complex forms which resolves the HJ.

The protein resides in the cytoplasm. The RuvA-RuvB-RuvC complex processes Holliday junction (HJ) DNA during genetic recombination and DNA repair, while the RuvA-RuvB complex plays an important role in the rescue of blocked DNA replication forks via replication fork reversal (RFR). RuvA specifically binds to HJ cruciform DNA, conferring on it an open structure. The RuvB hexamer acts as an ATP-dependent pump, pulling dsDNA into and through the RuvAB complex. HJ branch migration allows RuvC to scan DNA until it finds its consensus sequence, where it cleaves and resolves the cruciform DNA. The polypeptide is Holliday junction branch migration complex subunit RuvA (Shigella boydii serotype 18 (strain CDC 3083-94 / BS512)).